Consider the following 860-residue polypeptide: Ubiquitin carboxyl-terminal hydrolase 13 (860 aa).

The UBP-type; degenerate zinc-finger motif lies at 168-276 (QVSRHARSLR…EHLLHFGIDM (109 aa)). C192, C195, C212, and H225 together coordinate Zn(2+). The USP domain maps to 318–857 (TGIKNLGNSC…LGYMYFYRRL (540 aa)). C327 acts as the Nucleophile in catalysis. Positions 611–636 (DLTPPIVIPEDTRDSSTNNSLESPEI) are disordered. UBA domains follow at residues 635-676 (EIDE…IIAH) and 710-750 (QPPE…IFTH). Residues 755 to 768 (DESEAMSDTADTEP) are compositionally biased toward acidic residues. The disordered stretch occupies residues 755–795 (DESEAMSDTADTEPNDNSFSNANAHTDSSLSPDQDLSSPRV). Residues 769-780 (NDNSFSNANAHT) show a composition bias toward polar residues. The span at 781–793 (DSSLSPDQDLSSP) shows a compositional bias: low complexity. H819 (proton acceptor) is an active-site residue.

Belongs to the peptidase C19 family.

The enzyme catalyses Thiol-dependent hydrolysis of ester, thioester, amide, peptide and isopeptide bonds formed by the C-terminal Gly of ubiquitin (a 76-residue protein attached to proteins as an intracellular targeting signal).. With respect to regulation, specifically inhibited by spautin-1 (specific and potent autophagy inhibitor-1), a derivative of MBCQ that binds to usp13 and inhibits deubiquitinase activity. Its function is as follows. Deubiquitinase that mediates deubiquitination of target proteins and is involved in various processes such as autophagy and endoplasmic reticulum-associated degradation (ERAD). In Danio rerio (Zebrafish), this protein is Ubiquitin carboxyl-terminal hydrolase 13 (usp13).